The primary structure comprises 294 residues: 4-hydroxy-tetrahydrodipicolinate synthase (294 aa).

Threonine 45 serves as a coordination point for pyruvate. Tyrosine 133 serves as the catalytic Proton donor/acceptor. Lysine 162 functions as the Schiff-base intermediate with substrate in the catalytic mechanism. Isoleucine 204 serves as a coordination point for pyruvate.

The protein belongs to the DapA family. Homotetramer; dimer of dimers.

The protein resides in the cytoplasm. The enzyme catalyses L-aspartate 4-semialdehyde + pyruvate = (2S,4S)-4-hydroxy-2,3,4,5-tetrahydrodipicolinate + H2O + H(+). It functions in the pathway amino-acid biosynthesis; L-lysine biosynthesis via DAP pathway; (S)-tetrahydrodipicolinate from L-aspartate: step 3/4. In terms of biological role, catalyzes the condensation of (S)-aspartate-beta-semialdehyde [(S)-ASA] and pyruvate to 4-hydroxy-tetrahydrodipicolinate (HTPA). The sequence is that of 4-hydroxy-tetrahydrodipicolinate synthase from Bartonella tribocorum (strain CIP 105476 / IBS 506).